We begin with the raw amino-acid sequence, 362 residues long: Protein OCA4 (362 aa).

Its function is as follows. Required for replication of Brome mosaic virus (BMV). The chain is Protein OCA4 (OCA4) from Saccharomyces cerevisiae (strain ATCC 204508 / S288c) (Baker's yeast).